The primary structure comprises 408 residues: UDP-N-acetylglucosamine--N-acetylmuramyl-(pentapeptide) pyrophosphoryl-undecaprenol N-acetylglucosamine transferase (408 aa).

The segment at 1 to 20 (MNDTVKKPTGGRGDDPLPAG) is disordered. UDP-N-acetyl-alpha-D-glucosamine contacts are provided by residues 41 to 43 (TAG), asparagine 160, arginine 197, serine 231, and glutamine 327.

This sequence belongs to the glycosyltransferase 28 family. MurG subfamily.

It localises to the cell membrane. The enzyme catalyses di-trans,octa-cis-undecaprenyl diphospho-N-acetyl-alpha-D-muramoyl-L-alanyl-D-glutamyl-meso-2,6-diaminopimeloyl-D-alanyl-D-alanine + UDP-N-acetyl-alpha-D-glucosamine = di-trans,octa-cis-undecaprenyl diphospho-[N-acetyl-alpha-D-glucosaminyl-(1-&gt;4)]-N-acetyl-alpha-D-muramoyl-L-alanyl-D-glutamyl-meso-2,6-diaminopimeloyl-D-alanyl-D-alanine + UDP + H(+). It participates in cell wall biogenesis; peptidoglycan biosynthesis. In terms of biological role, cell wall formation. Catalyzes the transfer of a GlcNAc subunit on undecaprenyl-pyrophosphoryl-MurNAc-pentapeptide (lipid intermediate I) to form undecaprenyl-pyrophosphoryl-MurNAc-(pentapeptide)GlcNAc (lipid intermediate II). The chain is UDP-N-acetylglucosamine--N-acetylmuramyl-(pentapeptide) pyrophosphoryl-undecaprenol N-acetylglucosamine transferase from Mycobacterium avium (strain 104).